The chain runs to 308 residues: Sulfoquinovosyl glycerol transport system permease protein SmoG (308 aa).

Helical transmembrane passes span 28-48 (LAVL…VYPV), 92-112 (VLIT…LALL), 126-146 (SLLI…AWFF), 164-184 (GIIW…TIIW), 223-243 (ITLP…TITA), and 279-299 (LGYG…VTAV). Residues 88 to 300 (TWNTVLITLI…ALSMCVTAVY (213 aa)) form the ABC transmembrane type-1 domain.

This sequence belongs to the binding-protein-dependent transport system permease family. As to quaternary structure, the complex is probably composed of two ATP-binding proteins (SmoE), two transmembrane proteins (SmoG and SmoH) and a solute-binding protein (SmoF).

It is found in the cell inner membrane. Part of the ABC transporter complex SmoEFGH involved in sulfoquinovosyl glycerol (SQGro) uptake. Responsible for the translocation of the substrate across the membrane. The sequence is that of Sulfoquinovosyl glycerol transport system permease protein SmoG from Agrobacterium fabrum (strain C58 / ATCC 33970) (Agrobacterium tumefaciens (strain C58)).